Consider the following 487-residue polypeptide: E3 ubiquitin-protein ligase RNF8 (487 aa).

The FHA domain occupies 38 to 92; it reads VTIGRGFSVTYQLISKVCPLMISRNHCVLKQNPEGQWTIMDNKSLNGVWLNRERL. Positions 68–72 are required for interaction with PIWIL1; that stretch reads QNPEG. A disordered region spans residues 135–195; the sequence is CLAPKNDHTT…PEKLHGKGEA (61 aa). Serine 157 carries the post-translational modification Phosphoserine. Over residues 184 to 193 the composition is skewed to basic and acidic residues; the sequence is AEPEKLHGKG. The RING-type zinc-finger motif lies at 405-443; that stretch reads CIICSEYFIEAVTLNCAHSFCSFCISEWMKRKVECPICR.

The protein belongs to the RNF8 family. In terms of assembly, homodimer. Forms a E2-E3 ubiquitin ligase complex composed of the RNF8 homodimer and a E2 heterodimer of UBE2N and UBE2V2. Interacts with class III E2s, including UBE2E1, UBE2E2, and UBE2E3 and with UBE2N. Interacts with RXRA. Interacts (via FHA domain) with phosphorylated HERC2 (via C-terminus). Interacts with PIWIL1; leading to sequester RNF8 in the cytoplasm. Interacts with WRAP53/TCAB1. Post-translationally, autoubiquitinated through 'Lys-48' and 'Lys-63' of ubiquitin. 'Lys-63' polyubiquitination is mediated by UBE2N. 'Lys-29'-type polyubiquitination is also observed, but it doesn't require its own functional RING-type zinc finger.

It is found in the nucleus. It localises to the cytoplasm. The protein resides in the midbody. Its subcellular location is the chromosome. The protein localises to the telomere. The enzyme catalyses S-ubiquitinyl-[E2 ubiquitin-conjugating enzyme]-L-cysteine + [acceptor protein]-L-lysine = [E2 ubiquitin-conjugating enzyme]-L-cysteine + N(6)-ubiquitinyl-[acceptor protein]-L-lysine.. The protein operates within protein modification; protein ubiquitination. E3 ubiquitin-protein ligase that plays a key role in DNA damage signaling via 2 distinct roles: by mediating the 'Lys-63'-linked ubiquitination of histones H2A and H2AX and promoting the recruitment of DNA repair proteins at double-strand breaks (DSBs) sites, and by catalyzing 'Lys-48'-linked ubiquitination to remove target proteins from DNA damage sites. Following DNA DSBs, it is recruited to the sites of damage by ATM-phosphorylated MDC1 and catalyzes the 'Lys-63'-linked ubiquitination of histones H2A and H2AX, thereby promoting the formation of TP53BP1 and BRCA1 ionizing radiation-induced foci (IRIF). Also controls the recruitment of UIMC1-BRCC3 (RAP80-BRCC36) and PAXIP1/PTIP to DNA damage sites. Promotes the recruitment of NBN to DNA damage sites by catalyzing 'Lys-6'-linked ubiquitination of NBN. Also recruited at DNA interstrand cross-links (ICLs) sites and catalyzes 'Lys-63'-linked ubiquitination of histones H2A and H2AX, leading to recruitment of FAAP20 and Fanconi anemia (FA) complex, followed by interstrand cross-link repair. H2A ubiquitination also mediates the ATM-dependent transcriptional silencing at regions flanking DSBs in cis, a mechanism to avoid collision between transcription and repair intermediates. Promotes the formation of 'Lys-63'-linked polyubiquitin chains via interactions with the specific ubiquitin-conjugating UBE2N/UBC13 and ubiquitinates non-histone substrates such as PCNA. Substrates that are polyubiquitinated at 'Lys-63' are usually not targeted for degradation. Also catalyzes the formation of 'Lys-48'-linked polyubiquitin chains via interaction with the ubiquitin-conjugating UBE2L6/UBCH8, leading to degradation of substrate proteins such as CHEK2, JMJD2A/KDM4A and KU80/XRCC5: it is still unclear how the preference toward 'Lys-48'- versus 'Lys-63'-linked ubiquitination is regulated but it could be due to RNF8 ability to interact with specific E2 specific ligases. For instance, interaction with phosphorylated HERC2 promotes the association between RNF8 and UBE2N/UBC13 and favors the specific formation of 'Lys-63'-linked ubiquitin chains. Promotes non-homologous end joining (NHEJ) by promoting the 'Lys-48'-linked ubiquitination and degradation the of KU80/XRCC5. Following DNA damage, mediates the ubiquitination and degradation of JMJD2A/KDM4A in collaboration with RNF168, leading to unmask H4K20me2 mark and promote the recruitment of TP53BP1 at DNA damage sites. Following DNA damage, mediates the ubiquitination and degradation of POLD4/p12, a subunit of DNA polymerase delta. In the absence of POLD4, DNA polymerase delta complex exhibits higher proofreading activity. In addition to its function in damage signaling, also plays a role in higher-order chromatin structure by mediating extensive chromatin decondensation. Involved in the activation of ATM by promoting histone H2B ubiquitination, which indirectly triggers histone H4 'Lys-16' acetylation (H4K16ac), establishing a chromatin environment that promotes efficient activation of ATM kinase. Required in the testis, where it plays a role in the replacement of histones during spermatogenesis. At uncapped telomeres, promotes the joining of deprotected chromosome ends by inducing H2A ubiquitination and TP53BP1 recruitment, suggesting that it may enhance cancer development by aggravating telomere-induced genome instability in case of telomeric crisis. Promotes the assembly of RAD51 at DNA DSBs in the absence of BRCA1 and TP53BP1 Also involved in class switch recombination in immune system, via its role in regulation of DSBs repair. May be required for proper exit from mitosis after spindle checkpoint activation and may regulate cytokinesis. May play a role in the regulation of RXRA-mediated transcriptional activity. Not involved in RXRA ubiquitination by UBE2E2. The chain is E3 ubiquitin-protein ligase RNF8 from Rattus norvegicus (Rat).